The following is an 82-amino-acid chain: EMBRYO SURROUNDING FACTOR 1-like protein 10 (82 aa).

An N-terminal signal peptide occupies residues 1–22 (MSSLYFAILCLFMIFLVPLHEF). 4 cysteine pairs are disulfide-bonded: Cys39–Cys55, Cys44–Cys74, Cys53–Cys70, and Cys56–Cys63.

It belongs to the MEG family. As to expression, expressed in stems, leaves and flowers.

The sequence is that of EMBRYO SURROUNDING FACTOR 1-like protein 10 (ESFL10) from Arabidopsis thaliana (Mouse-ear cress).